We begin with the raw amino-acid sequence, 196 residues long: Peptidyl-tRNA hydrolase (196 aa).

His15 is a binding site for tRNA. His20 serves as the catalytic Proton acceptor. Tyr66, Asn68, and Asn114 together coordinate tRNA.

This sequence belongs to the PTH family. In terms of assembly, monomer.

Its subcellular location is the cytoplasm. The catalysed reaction is an N-acyl-L-alpha-aminoacyl-tRNA + H2O = an N-acyl-L-amino acid + a tRNA + H(+). Its function is as follows. Hydrolyzes ribosome-free peptidyl-tRNAs (with 1 or more amino acids incorporated), which drop off the ribosome during protein synthesis, or as a result of ribosome stalling. Catalyzes the release of premature peptidyl moieties from peptidyl-tRNA molecules trapped in stalled 50S ribosomal subunits, and thus maintains levels of free tRNAs and 50S ribosomes. The sequence is that of Peptidyl-tRNA hydrolase from Polynucleobacter asymbioticus (strain DSM 18221 / CIP 109841 / QLW-P1DMWA-1) (Polynucleobacter necessarius subsp. asymbioticus).